Reading from the N-terminus, the 469-residue chain is Glutamate--tRNA ligase (469 aa).

The 'HIGH' region motif lies at 9 to 19 (PSPTGFLHVGG). The Zn(2+) site is built by Cys98, Cys100, Cys125, and Asp127. Positions 236–240 (KLSKR) match the 'KMSKS' region motif. Lys239 contacts ATP.

Belongs to the class-I aminoacyl-tRNA synthetase family. Glutamate--tRNA ligase type 1 subfamily. Monomer. Requires Zn(2+) as cofactor.

It is found in the cytoplasm. The catalysed reaction is tRNA(Glu) + L-glutamate + ATP = L-glutamyl-tRNA(Glu) + AMP + diphosphate. In terms of biological role, catalyzes the attachment of glutamate to tRNA(Glu) in a two-step reaction: glutamate is first activated by ATP to form Glu-AMP and then transferred to the acceptor end of tRNA(Glu). The chain is Glutamate--tRNA ligase from Shewanella loihica (strain ATCC BAA-1088 / PV-4).